The primary structure comprises 344 residues: N-acetyl-gamma-glutamyl-phosphate reductase (344 aa).

C148 is an active-site residue.

This sequence belongs to the NAGSA dehydrogenase family. Type 1 subfamily.

It localises to the cytoplasm. It carries out the reaction N-acetyl-L-glutamate 5-semialdehyde + phosphate + NADP(+) = N-acetyl-L-glutamyl 5-phosphate + NADPH + H(+). The protein operates within amino-acid biosynthesis; L-arginine biosynthesis; N(2)-acetyl-L-ornithine from L-glutamate: step 3/4. In terms of biological role, catalyzes the NADPH-dependent reduction of N-acetyl-5-glutamyl phosphate to yield N-acetyl-L-glutamate 5-semialdehyde. The chain is N-acetyl-gamma-glutamyl-phosphate reductase from Clostridium beijerinckii (strain ATCC 51743 / NCIMB 8052) (Clostridium acetobutylicum).